We begin with the raw amino-acid sequence, 122 residues long: MSCTPFINQVIHKDYTLPQFWNLLKLVLDTQINILEFCIIHHVVQSFCTTIRVGNPKYLHCFYLNTANLNYKILNPLMLYYFLHSKEYRVPPLSNLEYPNFQPVAKRWYFLVHFLGLILNNF.

This is an uncharacterized protein from Saccharomyces cerevisiae (strain ATCC 204508 / S288c) (Baker's yeast).